Consider the following 482-residue polypeptide: Iroquois-class homeodomain protein irx-5 (482 aa).

The segment at residues 109-171 (DPAYRKNATR…NARRRLKKEN (63 aa)) is a DNA-binding region (homeobox). Disordered regions lie at residues 173–307 (MTWT…HQSH) and 462–482 (QSQADLNKDTPYEMKKGMSSI). Residues 182–198 (EDEEDDENIDLEKNEED) show a composition bias toward acidic residues. Residues 199-256 (DPRKLEEKGDQDGDAGDQKRSPSAVDFDRLEGEVRQGKELDQTRSDSEQNEVEERNDL) are compositionally biased toward basic and acidic residues. Positions 264–273 (PTSPLCPPDQ) are enriched in pro residues. The segment covering 284-305 (HRHTVHNHHHQSIQQLHHHSHQ) has biased composition (basic residues). A compositionally biased stretch (basic and acidic residues) spans 467 to 482 (LNKDTPYEMKKGMSSI).

The protein belongs to the TALE/IRO homeobox family. As to expression, expressed in the neural plate in overlapping patterns with other irx members, which all share an anterior border of expression. Broadly expressed in the tailbud rhombencephalon (hindbrain). Outside the nervous system and at tailbud stages, expressed in the developing otic vesicle and branchial arches.

The protein resides in the nucleus. Acts partially redundantly with other irx members in neural patterning. Required for formation of the posterior forebrain, midbrain, hindbrain, and to a lesser extent, spinal cord. Patterns the neuroectoderm in both the anterior/posterior and dorsal/ventral axes. Does not appear to play a role in pronephros kidney development. Involved in craniofacial and gonadal development. Modulates the migration of progenitor cell populations in branchial arches and gonads by repressing CXCL12. In Xenopus tropicalis (Western clawed frog), this protein is Iroquois-class homeodomain protein irx-5.